The primary structure comprises 248 residues: PF03932 family protein CutC (248 aa).

Belongs to the CutC family. As to quaternary structure, homodimer.

It localises to the cytoplasm. The polypeptide is PF03932 family protein CutC (Salmonella enteritidis PT4 (strain P125109)).